The following is a 112-amino-acid chain: Small ribosomal subunit protein bS6c (112 aa).

Belongs to the bacterial ribosomal protein bS6 family.

It is found in the plastid. Its subcellular location is the chloroplast. Its function is as follows. Binds together with bS18 to 16S ribosomal RNA. This is Small ribosomal subunit protein bS6c (rps6) from Porphyra purpurea (Red seaweed).